The following is a 403-amino-acid chain: NADH-quinone oxidoreductase subunit D (403 aa).

Belongs to the complex I 49 kDa subunit family. NDH-1 is composed of 14 different subunits. Subunits NuoB, C, D, E, F, and G constitute the peripheral sector of the complex.

It is found in the cell inner membrane. It carries out the reaction a quinone + NADH + 5 H(+)(in) = a quinol + NAD(+) + 4 H(+)(out). Its function is as follows. NDH-1 shuttles electrons from NADH, via FMN and iron-sulfur (Fe-S) centers, to quinones in the respiratory chain. The immediate electron acceptor for the enzyme in this species is believed to be ubiquinone. Couples the redox reaction to proton translocation (for every two electrons transferred, four hydrogen ions are translocated across the cytoplasmic membrane), and thus conserves the redox energy in a proton gradient. The chain is NADH-quinone oxidoreductase subunit D from Pelobacter propionicus (strain DSM 2379 / NBRC 103807 / OttBd1).